We begin with the raw amino-acid sequence, 251 residues long: Phosphate import ATP-binding protein PstB 2 (251 aa).

One can recognise an ABC transporter domain in the interval 5-246; the sequence is ISAKDVHLSY…PKKQITSDYL (242 aa). Position 37-44 (37-44) interacts with ATP; sequence GPSGCGKS.

It belongs to the ABC transporter superfamily. Phosphate importer (TC 3.A.1.7) family. In terms of assembly, the complex is composed of two ATP-binding proteins (PstB), two transmembrane proteins (PstC and PstA) and a solute-binding protein (PstS).

Its subcellular location is the cell membrane. It carries out the reaction phosphate(out) + ATP + H2O = ADP + 2 phosphate(in) + H(+). In terms of biological role, part of the ABC transporter complex PstSACB involved in phosphate import. Responsible for energy coupling to the transport system. This chain is Phosphate import ATP-binding protein PstB 2, found in Lactobacillus acidophilus (strain ATCC 700396 / NCK56 / N2 / NCFM).